The chain runs to 72 residues: Small ribosomal subunit protein bS20 (72 aa).

This sequence belongs to the bacterial ribosomal protein bS20 family.

In terms of biological role, binds directly to 16S ribosomal RNA. The protein is Small ribosomal subunit protein bS20 (rpsT) of Klebsiella pneumoniae.